The chain runs to 283 residues: Pantothenate synthetase (283 aa).

30–37 (MGNLHLGH) lines the ATP pocket. His37 (proton donor) is an active-site residue. Residue Gln61 participates in (R)-pantoate binding. Gln61 serves as a coordination point for beta-alanine. 149-152 (GQKD) contributes to the ATP binding site. Gln155 is a binding site for (R)-pantoate. Residues Ile178 and 186–189 (MSSR) contribute to the ATP site.

Belongs to the pantothenate synthetase family. As to quaternary structure, homodimer.

It is found in the cytoplasm. The catalysed reaction is (R)-pantoate + beta-alanine + ATP = (R)-pantothenate + AMP + diphosphate + H(+). Its pathway is cofactor biosynthesis; (R)-pantothenate biosynthesis; (R)-pantothenate from (R)-pantoate and beta-alanine: step 1/1. Catalyzes the condensation of pantoate with beta-alanine in an ATP-dependent reaction via a pantoyl-adenylate intermediate. This chain is Pantothenate synthetase, found in Shewanella halifaxensis (strain HAW-EB4).